Consider the following 309-residue polypeptide: Ribonuclease Z (309 aa).

Zn(2+) is bound by residues His-63, His-65, Asp-67, His-68, His-145, Asp-216, and His-274. The active-site Proton acceptor is Asp-67.

This sequence belongs to the RNase Z family. As to quaternary structure, homodimer. Zn(2+) is required as a cofactor.

The catalysed reaction is Endonucleolytic cleavage of RNA, removing extra 3' nucleotides from tRNA precursor, generating 3' termini of tRNAs. A 3'-hydroxy group is left at the tRNA terminus and a 5'-phosphoryl group is left at the trailer molecule.. In terms of biological role, zinc phosphodiesterase, which displays some tRNA 3'-processing endonuclease activity. Probably involved in tRNA maturation, by removing a 3'-trailer from precursor tRNA. The polypeptide is Ribonuclease Z (Streptococcus equi subsp. equi (strain 4047)).